Here is a 272-residue protein sequence, read N- to C-terminus: Putative hydro-lyase AZC_4080 (272 aa).

This sequence belongs to the D-glutamate cyclase family.

This Azorhizobium caulinodans (strain ATCC 43989 / DSM 5975 / JCM 20966 / LMG 6465 / NBRC 14845 / NCIMB 13405 / ORS 571) protein is Putative hydro-lyase AZC_4080.